The following is a 403-amino-acid chain: Poly(rC)-binding protein 4 (403 aa).

3 KH domains span residues 17–67, 101–154, and 241–293; these read TLTL…TITG, PVTL…TVSG, and TSSQ…TITG.

It is found in the cytoplasm. Its function is as follows. Single-stranded nucleic acid binding protein that binds preferentially to oligo dC. This Bos taurus (Bovine) protein is Poly(rC)-binding protein 4 (PCBP4).